The chain runs to 368 residues: Anhydro-N-acetylmuramic acid kinase (368 aa).

11–18 (GTSLDGID) contacts ATP.

This sequence belongs to the anhydro-N-acetylmuramic acid kinase family.

The catalysed reaction is 1,6-anhydro-N-acetyl-beta-muramate + ATP + H2O = N-acetyl-D-muramate 6-phosphate + ADP + H(+). The protein operates within amino-sugar metabolism; 1,6-anhydro-N-acetylmuramate degradation. Its pathway is cell wall biogenesis; peptidoglycan recycling. In terms of biological role, catalyzes the specific phosphorylation of 1,6-anhydro-N-acetylmuramic acid (anhMurNAc) with the simultaneous cleavage of the 1,6-anhydro ring, generating MurNAc-6-P. Is required for the utilization of anhMurNAc either imported from the medium or derived from its own cell wall murein, and thus plays a role in cell wall recycling. The protein is Anhydro-N-acetylmuramic acid kinase of Sulfurimonas denitrificans (strain ATCC 33889 / DSM 1251) (Thiomicrospira denitrificans (strain ATCC 33889 / DSM 1251)).